The following is a 1358-amino-acid chain: Phosphoinositide 3-kinase regulatory subunit 4 (1358 aa).

G2 carries the N-myristoyl glycine lipid modification. Residues 26-324 enclose the Protein kinase domain; the sequence is FEYDKSLGST…AFPEIFYTFL (299 aa). ATP-binding positions include 32-40 and K53; that span reads LGSTRFFKV. D148 functions as the Proton acceptor in the catalytic mechanism. HEAT repeat units lie at residues 413-450, 458-495, 572-610, and 612-648; these read ILLD…LVQE, IYPE…TALR, KAND…YVGW, and SSSI…LGLL. S808, S813, S853, and S865 each carry phosphoserine. WD repeat units follow at residues 991–1030, 1040–1079, 1093–1134, 1139–1178, 1182–1223, and 1237–1278; these read EHKS…GKTT, RIGG…LPKS, KEDG…NAWT, LKSG…PISS, PSRA…RRLT, and PSPH…RSYV. Residues 1307–1326 are disordered; that stretch reads KQKVGPSDDTPRRGPESLPV. Positions 1315 to 1326 are enriched in basic and acidic residues; it reads DTPRRGPESLPV. T1316 is modified (phosphothreonine). The WD 7 repeat unit spans residues 1327-1358; the sequence is GHHDIITDIATFQTTQGFIVTASRDGIVKVWK.

It belongs to the protein kinase superfamily. Ser/Thr protein kinase family. In terms of assembly, component of the PI3K (PI3KC3/PI3K-III/class III phosphatidylinositol 3-kinase) complex the core of which is composed of the catalytic subunit PIK3C3, the regulatory subunit PIK3R4 and BECN1 associating with additional regulatory/auxiliary subunits to form alternative complex forms. Alternative complex forms containing a fourth regulatory subunit in a mutually exclusive manner are PI3K complex I (PI3KC3-C1) containing ATG14, and PI3K complex II (PI3KC3-C2) containing UVRAG. PI3KC3-C1 displays a V-shaped architecture with PIK3R4 serving as a bridge between PIK3C3 and the ATG14:BECN1 subcomplex. Both, PI3KC3-C1 and PI3KC3-C2, can associate with further regulatory subunits, such as RUBCN, SH3GLB1/Bif-1, AMBRA1 and NRBF2. PI3KC3-C1 probably associates with PIK3CB. Interacts with RAB7A in the presence of PIK3C3/VPS34. Interacts with NRBF2. Interacts with ARMC3. Mn(2+) serves as cofactor. Post-translationally, myristoylated. In terms of processing, probably autophosphorylated.

Its subcellular location is the late endosome. It localises to the cytoplasmic vesicle. The protein resides in the autophagosome. It is found in the membrane. It carries out the reaction L-seryl-[protein] + ATP = O-phospho-L-seryl-[protein] + ADP + H(+). It catalyses the reaction L-threonyl-[protein] + ATP = O-phospho-L-threonyl-[protein] + ADP + H(+). Regulatory subunit of the PI3K complex that mediates formation of phosphatidylinositol 3-phosphate; different complex forms are believed to play a role in multiple membrane trafficking pathways: PI3KC3-C1 is involved in initiation of autophagosomes and PI3KC3-C2 in maturation of autophagosomes and endocytosis. Involved in regulation of degradative endocytic trafficking and cytokinesis, probably in the context of PI3KC3-C2. The sequence is that of Phosphoinositide 3-kinase regulatory subunit 4 (Pik3r4) from Mus musculus (Mouse).